An 834-amino-acid chain; its full sequence is Kinesin-like protein KIF18B (834 aa).

The 345-residue stretch at 9-353 (VVRVVVRVRP…LKYADRAKEI (345 aa)) folds into the Kinesin motor domain. An ATP-binding site is contributed by 111–118 (GATGAGKT). Residues 368–404 (ISQYATICQQLQAEVAFLREKLQMYEAGAQALQQQCS) adopt a coiled-coil conformation. Disordered stretches follow at residues 400–508 (QQQC…ADHS), 602–642 (LGAP…NLEM), 655–686 (RGSLPKAQPCSEPRTPKRERASSPSPSSRVCP), and 800–834 (KKPNRPFTVPEPPLSPHCLDDQRTPKGLTGVTESY). Residues 411-432 (SIPQSLSSSSLQPGPSSQSSTL) show a composition bias toward low complexity. Position 431 is a phosphothreonine (Thr-431). The span at 462–474 (EQEQCPQDKQCPT) shows a compositional bias: polar residues. Ser-484 bears the Phosphoserine mark. Basic and acidic residues predominate over residues 611–620 (TSDKTFQKPT). Positions 619-627 (PTKEKKRKL) match the Nuclear localization signal motif. Residues Ser-634 and Ser-657 each carry the phosphoserine modification. Thr-669 bears the Phosphothreonine mark. Ser-814 bears the Phosphoserine mark.

It belongs to the TRAFAC class myosin-kinesin ATPase superfamily. Kinesin family. As to quaternary structure, interacts with MAPRE1; this interaction is required for efficient accumulation at microtubule plus ends. Interacts with KIF2C at microtubule tips; this interaction increases the affinity of both partners for microtubule plus ends and is required for robust microtubule depolymerization. KIF2C phosphorylation by AURKA or AURKB strongly reduces KIF18B-binding.

The protein localises to the nucleus. It localises to the cytoplasm. It is found in the cytoskeleton. In terms of biological role, in complex with KIF2C, constitutes the major microtubule plus-end depolymerizing activity in mitotic cells. Its major role may be to transport KIF2C and/or MAPRE1 along microtubules. This chain is Kinesin-like protein KIF18B (Kif18b), found in Mus musculus (Mouse).